The chain runs to 451 residues: Bifunctional protein GlmU (451 aa).

Residues 1 to 231 form a pyrophosphorylase region; it reads MDSPLAIIVL…ADEVAGINSR (231 aa). UDP-N-acetyl-alpha-D-glucosamine is bound by residues 10-13, Lys-24, Gln-74, 79-80, 102-104, Gly-142, Glu-156, Asn-171, and Asn-229; these read LAAG, GT, and YGD. Asp-104 is a Mg(2+) binding site. Mg(2+) is bound at residue Asn-229. Residues 232–252 form a linker region; the sequence is GELAEAEGRWQQRRRAAAMAD. The segment at 253–451 is N-acetyltransferase; the sequence is GASLIAPETV…MKKKKAEKKS (199 aa). Residues Arg-318 and Lys-336 each contribute to the UDP-N-acetyl-alpha-D-glucosamine site. His-348 functions as the Proton acceptor in the catalytic mechanism. Residues Tyr-351 and Asn-362 each coordinate UDP-N-acetyl-alpha-D-glucosamine. Acetyl-CoA-binding positions include Ala-365, 371–372, Ser-390, Ala-408, and Arg-425; that span reads NY.

This sequence in the N-terminal section; belongs to the N-acetylglucosamine-1-phosphate uridyltransferase family. In the C-terminal section; belongs to the transferase hexapeptide repeat family. As to quaternary structure, homotrimer. Mg(2+) serves as cofactor.

It is found in the cytoplasm. The enzyme catalyses alpha-D-glucosamine 1-phosphate + acetyl-CoA = N-acetyl-alpha-D-glucosamine 1-phosphate + CoA + H(+). It carries out the reaction N-acetyl-alpha-D-glucosamine 1-phosphate + UTP + H(+) = UDP-N-acetyl-alpha-D-glucosamine + diphosphate. Its pathway is nucleotide-sugar biosynthesis; UDP-N-acetyl-alpha-D-glucosamine biosynthesis; N-acetyl-alpha-D-glucosamine 1-phosphate from alpha-D-glucosamine 6-phosphate (route II): step 2/2. It functions in the pathway nucleotide-sugar biosynthesis; UDP-N-acetyl-alpha-D-glucosamine biosynthesis; UDP-N-acetyl-alpha-D-glucosamine from N-acetyl-alpha-D-glucosamine 1-phosphate: step 1/1. It participates in bacterial outer membrane biogenesis; LPS lipid A biosynthesis. Its function is as follows. Catalyzes the last two sequential reactions in the de novo biosynthetic pathway for UDP-N-acetylglucosamine (UDP-GlcNAc). The C-terminal domain catalyzes the transfer of acetyl group from acetyl coenzyme A to glucosamine-1-phosphate (GlcN-1-P) to produce N-acetylglucosamine-1-phosphate (GlcNAc-1-P), which is converted into UDP-GlcNAc by the transfer of uridine 5-monophosphate (from uridine 5-triphosphate), a reaction catalyzed by the N-terminal domain. The protein is Bifunctional protein GlmU of Novosphingobium aromaticivorans (strain ATCC 700278 / DSM 12444 / CCUG 56034 / CIP 105152 / NBRC 16084 / F199).